We begin with the raw amino-acid sequence, 561 residues long: MPESKYRQQTIRAPRGTVLTAKSWLTEAPLRMLMNNLDPDVAENPHELVVYGGIGRAARNWECYDAIVDALTRLEADETLLIQSGKPVGVFKTHDNAPRVLIANSNLAPHWATWEHFNELDAKGLAMYGQMTAGSWIYIGSQGIVQGTYETFVEAGCQHYNGTLAGRWVLTAGLGGMGGAQPLAATLAGACSLTIECQQSRIDFRLRTRYVDEQAATLDDALARITRYTREGKAVSVALCANAADILPELVNRGVRPDLVTDQTSAHDPLHGYLPSGWRWEEYQKNAQSDPHGTMQAAKRSMAAHVRAMLAFSKMGVPTFDYGNNIRQMAKEMGVENAFDFPGFVPAYIRPLFCRGIGPFRWVALSGDPQDIYKTDAKVKEIVAEDKHLHHWLDMARERIHFQGLPARICWVGLEWRQKLGLAFNEMVRCGEVSAPIVIGRDHLDSGSVASPNRETEAMRDGSDAVSDWPLLNALLNTASGATWVSLHHGGGVGMGFSQHAGMVIVCDGTDEAAARIRRVLHNDPATGVMRHADAGYDLAVECAVEQGLNLPMVAATQGKG.

Residues glycine 52–glycine 53, glutamine 130, glycine 176–glycine 178, glutamate 196, arginine 201, asparagine 242–alanine 243, glutamine 263–histidine 267, tyrosine 273–leucine 274, and tyrosine 322 each bind NAD(+). Cysteine 410 is a catalytic residue. NAD(+) is bound at residue glycine 492.

It belongs to the urocanase family. Requires NAD(+) as cofactor.

It is found in the cytoplasm. It carries out the reaction 4-imidazolone-5-propanoate = trans-urocanate + H2O. It functions in the pathway amino-acid degradation; L-histidine degradation into L-glutamate; N-formimidoyl-L-glutamate from L-histidine: step 2/3. Catalyzes the conversion of urocanate to 4-imidazolone-5-propionate. In Salmonella gallinarum (strain 287/91 / NCTC 13346), this protein is Urocanate hydratase.